The sequence spans 214 residues: Putative F-box protein At5g15670 (214 aa).

An F-box domain is found at 22-68 (RNKFDEIPHDLVIEILGRLPAKSVARFLTVSKLWATSIRSLDFIKSY).

The chain is Putative F-box protein At5g15670 from Arabidopsis thaliana (Mouse-ear cress).